A 433-amino-acid chain; its full sequence is Serine/threonine-protein kinase toxin HipA (433 aa).

A Phosphoserine; by autocatalysis modification is found at S147. ATP contacts are provided by residues 151-154, K178, and 220-222; these read VQPK and ERF. The Proton acceptor role is filled by D306. ATP is bound by residues 308–311 and 327–328; these read HGKN and YD. 2 DNA-binding regions span residues 380-384 and R429; that span reads RIARR.

The protein belongs to the HipA Ser/Thr kinase family. Monomer. Forms a HipA(2)HipB(2)-DNA complex with cognate antitoxin HipB; has higher affinity for the latter when HipB is prebound to DNA and HipA is phosphorylated. Binds DNA in the ternary complex.

The catalysed reaction is L-seryl-[protein] + ATP = O-phospho-L-seryl-[protein] + ADP + H(+). It carries out the reaction L-threonyl-[protein] + ATP = O-phospho-L-threonyl-[protein] + ADP + H(+). Toxic component of a type II toxin-antitoxin (TA) system; overexpression in wild-type temporarily inhibits cell growth, overexpression in a hipAB deletion leads to acute growth inhibition. The toxic effect of HipA is neutralized by its cognate antitoxin HipB. In the ternary phosphoserine-HipA-HipB-DNA complex the DNA is bent about 125 degrees; all HipA in the crystallized ternary complex is phosphorylated. In E.coli phosphorylation of HipA is thought to release HipB from the HipA-HipB-DNA complex, suggesting the complex functions differently in the 2 bacteria. Phosphorylates Glu-tRNA-ligase (GltX, on 'Ser-239') in vivo, with HipB probably acts as a corepressor for transcription of the hipBA promoter. The chain is Serine/threonine-protein kinase toxin HipA from Shewanella oneidensis (strain ATCC 700550 / JCM 31522 / CIP 106686 / LMG 19005 / NCIMB 14063 / MR-1).